We begin with the raw amino-acid sequence, 420 residues long: Glutaryl-CoA dehydrogenase, mitochondrial (420 aa).

125-126 serves as a coordination point for substrate; it reads RS. Residues 164 to 167, serine 173, and 198 to 200 contribute to the FAD site; these read FGLT and WIT. Residue serine 173 participates in substrate binding. Substrate contacts are provided by residues 273-277 and arginine 280; that span reads FSCLN. Glutamate 400 functions as the Proton acceptor in the catalytic mechanism. 2 residues coordinate FAD: threonine 402 and phenylalanine 420.

It belongs to the acyl-CoA dehydrogenase family. FAD is required as a cofactor.

Its subcellular location is the mitochondrion matrix. The enzyme catalyses glutaryl-CoA + oxidized [electron-transfer flavoprotein] + 2 H(+) = (2E)-butenoyl-CoA + reduced [electron-transfer flavoprotein] + CO2. It participates in amino-acid metabolism; lysine degradation. The protein operates within amino-acid metabolism; tryptophan metabolism. The polypeptide is Glutaryl-CoA dehydrogenase, mitochondrial (gcdh) (Dictyostelium discoideum (Social amoeba)).